The sequence spans 290 residues: Ubiquinone biosynthesis protein COQ4, mitochondrial (290 aa).

Residues 1-32 constitute a mitochondrion transit peptide; it reads MAKRVCVGDLRKLAGSVSTPSRCILPPHARCF. H168, D169, H172, and E184 together coordinate Zn(2+). A disordered region spans residues 260–290; sequence KPPDLREMRKAEREAQKKDKEAKETMTRAAV.

It belongs to the COQ4 family. Component of a multi-subunit COQ enzyme complex, composed of at least COQ3, COQ4, COQ5, COQ6, COQ7 and COQ9. Zn(2+) serves as cofactor.

Its subcellular location is the mitochondrion inner membrane. It catalyses the reaction a 4-hydroxy-3-methoxy-5-(all-trans-polyprenyl)benzoate + H(+) = a 2-methoxy-6-(all-trans-polyprenyl)phenol + CO2. The protein operates within cofactor biosynthesis; ubiquinone biosynthesis. Lyase that catalyzes the C1-decarboxylation of 4-hydroxy-3-methoxy-5-(all-trans-polyprenyl)benzoic acid into 2-methoxy-6-(all-trans-polyprenyl)phenol during ubiquinone biosynthesis. This is Ubiquinone biosynthesis protein COQ4, mitochondrial from Phaeosphaeria nodorum (strain SN15 / ATCC MYA-4574 / FGSC 10173) (Glume blotch fungus).